The primary structure comprises 66 residues: Large ribosomal subunit protein bL35 (66 aa).

Residues 1–15 (MSKMKTKSGAKKRFK) are compositionally biased toward basic residues. The disordered stretch occupies residues 1–35 (MSKMKTKSGAKKRFKLTASGKVKAGQAGKRHGMIK).

The protein belongs to the bacterial ribosomal protein bL35 family.

The polypeptide is Large ribosomal subunit protein bL35 (Maricaulis maris (strain MCS10) (Caulobacter maris)).